Here is a 297-residue protein sequence, read N- to C-terminus: Translational activator of cytochrome c oxidase 1 (297 aa).

The interval R20–A45 is disordered. Residues P28–P39 are compositionally biased toward basic and acidic residues. Residues V191–R227 adopt a coiled-coil conformation.

The protein belongs to the TACO1 family.

The protein localises to the mitochondrion. Functionally, acts as a translational activator of mitochondrially-encoded cytochrome c oxidase 1. In Homo sapiens (Human), this protein is Translational activator of cytochrome c oxidase 1 (TACO1).